The following is a 199-amino-acid chain: Zinc finger matrin-type protein 2 (199 aa).

The residue at position 2 (Ala-2) is an N-acetylalanine. Glycyl lysine isopeptide (Lys-Gly) (interchain with G-Cter in SUMO2) cross-links involve residues Lys-8, Lys-36, Lys-39, Lys-45, Lys-55, Lys-61, Lys-64, Lys-70, Lys-102, and Lys-123. A disordered region spans residues 27-46 (KRLTEEREKKDGKPVQPVKR). A Matrin-type zinc finger spans residues 80-104 (YYCNVCDCVVKDSINFLDHINGKKH). Residues 150–173 (REEEEKAKAYKKEKQKEKKRRAEE) show a composition bias toward basic and acidic residues. A disordered region spans residues 150–175 (REEEEKAKAYKKEKQKEKKRRAEEDL).

As to quaternary structure, component of the spliceosome B complex.

The protein localises to the nucleus. Involved in pre-mRNA splicing as a component of the spliceosome. The protein is Zinc finger matrin-type protein 2 (ZMAT2) of Homo sapiens (Human).